A 401-amino-acid chain; its full sequence is 1-deoxy-D-xylulose 5-phosphate reductoisomerase (401 aa).

Threonine 11, glycine 12, serine 13, isoleucine 14, arginine 38, asparagine 39, and asparagine 125 together coordinate NADPH. Lysine 126 serves as a coordination point for 1-deoxy-D-xylulose 5-phosphate. Glutamate 127 contributes to the NADPH binding site. Aspartate 151 contacts Mn(2+). Positions 152, 153, 179, and 202 each coordinate 1-deoxy-D-xylulose 5-phosphate. Glutamate 153 contributes to the Mn(2+) binding site. Glycine 208 contributes to the NADPH binding site. 1-deoxy-D-xylulose 5-phosphate is bound by residues serine 215, asparagine 220, lysine 221, and glutamate 224. Glutamate 224 is a Mn(2+) binding site.

This sequence belongs to the DXR family. Requires Mg(2+) as cofactor. Mn(2+) serves as cofactor.

The enzyme catalyses 2-C-methyl-D-erythritol 4-phosphate + NADP(+) = 1-deoxy-D-xylulose 5-phosphate + NADPH + H(+). It participates in isoprenoid biosynthesis; isopentenyl diphosphate biosynthesis via DXP pathway; isopentenyl diphosphate from 1-deoxy-D-xylulose 5-phosphate: step 1/6. Its function is as follows. Catalyzes the NADPH-dependent rearrangement and reduction of 1-deoxy-D-xylulose-5-phosphate (DXP) to 2-C-methyl-D-erythritol 4-phosphate (MEP). The polypeptide is 1-deoxy-D-xylulose 5-phosphate reductoisomerase (Paraburkholderia xenovorans (strain LB400)).